The sequence spans 213 residues: Uridine kinase (213 aa).

14–21 lines the ATP pocket; that stretch reads GASASGKS.

This sequence belongs to the uridine kinase family.

It is found in the cytoplasm. The catalysed reaction is uridine + ATP = UMP + ADP + H(+). It carries out the reaction cytidine + ATP = CMP + ADP + H(+). The protein operates within pyrimidine metabolism; CTP biosynthesis via salvage pathway; CTP from cytidine: step 1/3. It functions in the pathway pyrimidine metabolism; UMP biosynthesis via salvage pathway; UMP from uridine: step 1/1. This is Uridine kinase from Vibrio cholerae serotype O1 (strain ATCC 39315 / El Tor Inaba N16961).